A 766-amino-acid polypeptide reads, in one-letter code: Tetratricopeptide repeat protein 14 (766 aa).

The tract at residues 35–55 (LGTAAEPARGAAPPPGAGRKE) is disordered. The S1 motif domain maps to 125–207 (GDIVIGRISS…YHEKLAVSLY (83 aa)). TPR repeat units follow at residues 209–242 (SSLP…NSNS), 306–339 (ALKC…DKQN), 341–373 (EALV…CPTH), and 381–414 (CQTL…DETF). The interval 463 to 743 (EEKRLKKKRR…PDSRVKKNLP (281 aa)) is disordered. Low complexity predominate over residues 475-496 (SSSSSVSSADESVSSSSSSSSS). Over residues 497-506 (SHKRHKKSKR) the composition is skewed to basic residues. Polar residues predominate over residues 539-550 (PTNTSASFLNQK). Basic and acidic residues predominate over residues 551–562 (QEVEKLLEKQDR). Residues 594-605 (FYNSYKTQAGSS) are compositionally biased toward polar residues. Composition is skewed to basic and acidic residues over residues 606 to 616 (KTEKPYKSERH) and 629 to 657 (NSED…RRWE). Over residues 661–673 (VKYSTSPASSDYS) the composition is skewed to polar residues. Serine 666 carries the phosphoserine modification. Over residues 707-738 (RVYEKEDSCGEGNRNEAPEEMLNSKEQPDSRV) the composition is skewed to basic and acidic residues.

It belongs to the TTC14 family.

In Mus musculus (Mouse), this protein is Tetratricopeptide repeat protein 14.